Consider the following 202-residue polypeptide: Small ribosomal subunit protein uS4c (202 aa).

Residues Met-90–Ile-153 form the S4 RNA-binding domain.

Belongs to the universal ribosomal protein uS4 family. Part of the 30S ribosomal subunit. Contacts protein S5. The interaction surface between S4 and S5 is involved in control of translational fidelity.

It localises to the plastid. The protein localises to the chloroplast. In terms of biological role, one of the primary rRNA binding proteins, it binds directly to 16S rRNA where it nucleates assembly of the body of the 30S subunit. Its function is as follows. With S5 and S12 plays an important role in translational accuracy. In Sphaerocarpos donnelli (Liverwort), this protein is Small ribosomal subunit protein uS4c (rps4).